We begin with the raw amino-acid sequence, 141 residues long: Methane monooxygenase regulatory protein B (141 aa).

The protein belongs to the TmoD/XamoD family. In terms of assembly, the soluble methane monooxygenase (sMMO) consists of four components A/MMOH (composed of alpha/MmoX, beta/MmoY and gamma/MmoZ), B/MMOB (MmoB), C/MMOR (MmoC) and D/MMOD (MmoD).

The B protein acts as a regulator of electron flow through the soluble mmo complex, switching the enzyme from an oxidase to a hydroxylase in the presence of the substrate. The sequence is that of Methane monooxygenase regulatory protein B (mmoB) from Methylococcus capsulatus (strain ATCC 33009 / NCIMB 11132 / Bath).